We begin with the raw amino-acid sequence, 251 residues long: Imidazole glycerol phosphate synthase subunit HisF (251 aa).

Active-site residues include aspartate 11 and aspartate 130.

Belongs to the HisA/HisF family. In terms of assembly, heterodimer of HisH and HisF.

It is found in the cytoplasm. It carries out the reaction 5-[(5-phospho-1-deoxy-D-ribulos-1-ylimino)methylamino]-1-(5-phospho-beta-D-ribosyl)imidazole-4-carboxamide + L-glutamine = D-erythro-1-(imidazol-4-yl)glycerol 3-phosphate + 5-amino-1-(5-phospho-beta-D-ribosyl)imidazole-4-carboxamide + L-glutamate + H(+). The protein operates within amino-acid biosynthesis; L-histidine biosynthesis; L-histidine from 5-phospho-alpha-D-ribose 1-diphosphate: step 5/9. In terms of biological role, IGPS catalyzes the conversion of PRFAR and glutamine to IGP, AICAR and glutamate. The HisF subunit catalyzes the cyclization activity that produces IGP and AICAR from PRFAR using the ammonia provided by the HisH subunit. This chain is Imidazole glycerol phosphate synthase subunit HisF, found in Chlorobium phaeovibrioides (strain DSM 265 / 1930) (Prosthecochloris vibrioformis (strain DSM 265)).